We begin with the raw amino-acid sequence, 634 residues long: Biosynthetic arginine decarboxylase (634 aa).

An N6-(pyridoxal phosphate)lysine modification is found at lysine 103. 283–293 serves as a coordination point for substrate; sequence FDVGGGLGVDY.

This sequence belongs to the Orn/Lys/Arg decarboxylase class-II family. SpeA subfamily. It depends on Mg(2+) as a cofactor. Pyridoxal 5'-phosphate is required as a cofactor.

It carries out the reaction L-arginine + H(+) = agmatine + CO2. Its pathway is amine and polyamine biosynthesis; agmatine biosynthesis; agmatine from L-arginine: step 1/1. Catalyzes the biosynthesis of agmatine from arginine. In Photorhabdus laumondii subsp. laumondii (strain DSM 15139 / CIP 105565 / TT01) (Photorhabdus luminescens subsp. laumondii), this protein is Biosynthetic arginine decarboxylase.